Reading from the N-terminus, the 3410-residue chain is Genome polyprotein (3410 aa).

At 1–103 the chain is on the cytoplasmic side; sequence MTKKPGRPGR…DFVHLPKKKS (103 aa). Residues 2-15 are interaction with host EXOC1; sequence TKKPGRPGRNRAVN. Residues 38 to 73 form a hydrophobic; homodimerization of capsid protein C region; it reads LLDGRGPLRMVLAILAFFRFTALKPTAGLLKRWGMM. Residues 103-119 constitute a propeptide, ER anchor for the capsid protein C, removed in mature form by serine protease NS3; that stretch reads SGVSIIGRMLVFSFTAA. Residues 104–124 form a helical membrane-spanning segment; sequence GVSIIGRMLVFSFTAAVRVTL. Residues 125–245 are Extracellular-facing; it reads ENGMSLMKIQ…ATSYLTKAES (121 aa). The chain crosses the membrane as a helical span at residues 246–266; sequence WALRNPGYALVAAVLGWSLGT. The Cytoplasmic segment spans residues 267–271; that stretch reads SNAQK. The helical transmembrane segment at 272–286 threads the bilayer; that stretch reads VIFTVMILLIAPAYS. Over 287–739 the chain is Extracellular; that stretch reads IRCVGVENRD…QIFGGMFRTL (453 aa). Cystine bridges form between C289–C316, C346–C402, C346–C407, C360–C391, C378–C402, and C378–C407. The segment at 384 to 397 is fusion peptide; that stretch reads DRGWGNGCGLFGKG. N-linked (GlcNAc...) asparagine; by host glycosylation is present at N440. Cystine bridges form between C476–C574 and C591–C622. The chain crosses the membrane as a helical span at residues 740 to 760; that stretch reads FGGMSWFTQIMIGALCCWLGI. At 761 to 766 the chain is on the cytoplasmic side; it reads NARDRT. A helical membrane pass occupies residues 767 to 787; sequence IAVTFLAVGGVLVFLATSVNA. Residues 788–1165 are Extracellular-facing; sequence DSGCALDLKR…IALQEVMRKR (378 aa). Cystine bridges form between C791-C802, C842-C928, C964-C1009, C1066-C1115, C1077-C1098, C1077-C1099, C1098-C1102, and C1099-C1102. N-linked (GlcNAc...) asparagine; by host glycosylation occurs at N915. Residues 1166–1186 form a helical membrane-spanning segment; the sequence is ILGRHITWMVIAVFMAMILGG. The Cytoplasmic portion of the chain corresponds to 1187 to 1214; the sequence is LSYRDLGRYLVLVGAAFAERNSGGDLLH. The helical transmembrane segment at 1215 to 1235 threads the bilayer; that stretch reads LVLVATFKVKPMALLGFVLGG. The Lumenal segment spans residues 1236–1242; sequence RWCRRQS. The helical transmembrane segment at 1243 to 1263 threads the bilayer; sequence LLLSIGAVLVNFALEFQGGYF. The Cytoplasmic segment spans residues 1264–1284; the sequence is ELVDSLALALLFVKAVVQTDT. A helical transmembrane segment spans residues 1285–1305; sequence TSVSLPLLAALAPAGCYTVLG. Residues 1306–1335 lie on the Lumenal side of the membrane; it reads THRFIMLTLVLVTFLGCKKTASVKKAGTAA. A helical membrane pass occupies residues 1336-1356; it reads VGVVLGMVGMKTIPMLGMLMV. At 1357 to 1363 the chain is on the cytoplasmic side; the sequence is TSRARRS. Residues 1364–1384 form a helical membrane-spanning segment; sequence WPLHEAMAAVGILCALFGALA. Residues 1385–1387 are Lumenal-facing; the sequence is ETE. The helical transmembrane segment at 1388-1408 threads the bilayer; it reads VDLAGPLAAAGLIVMAYVISG. The Cytoplasmic segment spans residues 1409–1464; sequence RSNDLSIKKVEDVKWSDEAEVTGESVSYHVSLDVRGDPTLTEDSGPGLEKVLLKVG. Residues 1415–1454 form an interacts with and activates NS3 protease region; it reads IKKVEDVKWSDEAEVTGESVSYHVSLDVRGDPTLTEDSGP. Positions 1465-1485 form an intramembrane region, helical; that stretch reads LMAISGIYPVAIPFALGAWFF. Residues 1486–2158 are Cytoplasmic-facing; the sequence is LEKRCKRAGA…KAALENSPEM (673 aa). The region spanning 1493 to 1670 is the Peptidase S7 domain; that stretch reads AGALWDIPSP…ENVGQEDGAE (178 aa). Residues H1543, D1567, and S1627 each act as charge relay system; for serine protease NS3 activity in the active site. The 157-residue stretch at 1673 to 1829 folds into the Helicase ATP-binding domain; it reads DNWFRKRELT…PSNSPIIDEE (157 aa). The important for RNA-binding stretch occupies residues 1677 to 1680; that stretch reads RKRE. Residue 1686–1693 participates in ATP binding; sequence LHPGAGKT. The DEAH box motif lies at 1777 to 1780; sequence DEAH. Positions 1839–2006 constitute a Helicase C-terminal domain; it reads SGYEWIIEFD…QLYTPEREKT (168 aa). K1881 carries the N6-acetyllysine; by host modification. Residues 2153-2157 form a regulates the ATPase activity of NS3 helicase region; the sequence is ENSPE. A helical membrane pass occupies residues 2159 to 2179; sequence IETFLLCALVCLMTIGLVVVL. Residues 2180–2185 lie on the Lumenal side of the membrane; it reads VRGKGP. The helical intramembrane region spans 2186–2205; that stretch reads GKLAFGMVSIGVMTWLLWSA. A topological domain (lumenal) is located at residue G2206. A helical membrane pass occupies residues 2207-2227; sequence VDPGKIAAAVILVFLLLVVLI. Topologically, residues 2228–2242 are cytoplasmic; sequence PEPEKQRSVQDNQLA. Residues 2243–2257 form a helical membrane-spanning segment; sequence MLMLLIATILGGVAA. The Lumenal segment spans residues 2258–2293; that stretch reads NEMGWLEKTKADLSWVVRGRSSTTTPVVELDMKPAT. An intramembrane region (helical) is located at residues 2294–2314; the sequence is AWTLYALATTLLTPLFQHLIV. At 2315 to 2336 the chain is on the lumenal side; the sequence is TKYANISLMAIASQAGTLFSMD. The helical transmembrane segment at 2337-2357 threads the bilayer; the sequence is SGIPFSSIELSVPLLALGCWT. Position 2358 (Q2358) is a topological domain, cytoplasmic. A helical transmembrane segment spans residues 2359-2379; the sequence is ITPCSLILACVLLSTHYAILL. Residues 2380-2420 are Lumenal-facing; the sequence is PGMQAQAARDAQRRTAAGIMKNAVVDGIVATDIPPLDGAGP. The helical transmembrane segment at 2421-2441 threads the bilayer; that stretch reads LTEKKLGQLLLFAAAVTGVVI. The Cytoplasmic segment spans residues 2442–3410; sequence TRSPRSWSEL…EKRVEFRGVL (969 aa). The mRNA cap 0-1 NS5-type MT domain maps to 2508 to 2773; that stretch reads GGGIGETLGE…DVNLSCGTRA (266 aa). S2563 serves as a coordination point for S-adenosyl-L-methionine. At S2563 the chain carries Phosphoserine. Residue K2568 is the For 2'-O-MTase activity of the active site. G2593, W2594, T2611, K2612, D2638, and V2639 together coordinate S-adenosyl-L-methionine. D2653 functions as the For 2'-O-MTase activity in the catalytic mechanism. I2654 is a binding site for S-adenosyl-L-methionine. Catalysis depends on for 2'-O-MTase activity residues K2690 and E2726. Y2728 serves as a coordination point for S-adenosyl-L-methionine. Zn(2+) contacts are provided by E2947, H2951, C2956, and C2959. Residues 3036-3187 form the RdRp catalytic domain; that stretch reads GILYADDTAG…AAPDARFGAA (152 aa). Positions 3222, 3238, and 3356 each coordinate Zn(2+).

This sequence in the N-terminal section; belongs to the class I-like SAM-binding methyltransferase superfamily. mRNA cap 0-1 NS5-type methyltransferase family. In terms of assembly, homodimer. Interacts (via N-terminus) with host EXOC1 (via C-terminus); this interaction results in EXOC1 degradation through the proteasome degradation pathway. Forms heterodimers with envelope protein E in the endoplasmic reticulum and Golgi. As to quaternary structure, homodimer; in the endoplasmic reticulum and Golgi. Interacts with protein prM. Interacts with non-structural protein 1. In terms of assembly, homodimer; Homohexamer when secreted. Interacts with envelope protein E. NS1 interacts with NS4B. Interacts with host complement protein CFH; this interaction leads to the degradation of C3. Interacts (via N-terminus) with serine protease NS3. As to quaternary structure, forms a heterodimer with serine protease NS3. May form homooligomers. In terms of assembly, forms a heterodimer with NS2B. Interacts with non-structural protein 2A (via N-terminus). Interacts with NS4B. Interacts with unphosphorylated RNA-directed RNA polymerase NS5; this interaction stimulates RNA-directed RNA polymerase NS5 guanylyltransferase activity. Interacts with serine protease NS3. As to quaternary structure, homodimer. Interacts with host STAT2; this interaction inhibits the phosphorylation of the latter, and, when all viral proteins are present (polyprotein), targets STAT2 for degradation. Post-translationally, specific enzymatic cleavages in vivo yield mature proteins. Cleavages in the lumen of endoplasmic reticulum are performed by host signal peptidase, whereas cleavages in the cytoplasmic side are performed by serine protease NS3. Signal cleavage at the 2K-4B site requires a prior NS3 protease-mediated cleavage at the 4A-2K site. Cleaved in post-Golgi vesicles by a host furin, releasing the mature small envelope protein M, and peptide pr. This cleavage is incomplete as up to 30% of viral particles still carry uncleaved prM. In terms of processing, N-glycosylated. Post-translationally, N-glycosylated. The excreted form is glycosylated and this is required for efficient secretion of the protein from infected cells. Acetylated by host KAT5. Acetylation modulates NS3 RNA-binding and unwinding activities and plays an important positive role for viral replication. In terms of processing, phosphorylated on serines residues. This phosphorylation may trigger NS5 nuclear localization.

It localises to the virion. It is found in the host nucleus. The protein localises to the host cytoplasm. The protein resides in the host perinuclear region. Its subcellular location is the secreted. It localises to the virion membrane. It is found in the host endoplasmic reticulum membrane. It catalyses the reaction Selective hydrolysis of -Xaa-Xaa-|-Yaa- bonds in which each of the Xaa can be either Arg or Lys and Yaa can be either Ser or Ala.. The catalysed reaction is RNA(n) + a ribonucleoside 5'-triphosphate = RNA(n+1) + diphosphate. The enzyme catalyses a ribonucleoside 5'-triphosphate + H2O = a ribonucleoside 5'-diphosphate + phosphate + H(+). It carries out the reaction ATP + H2O = ADP + phosphate + H(+). It catalyses the reaction a 5'-end (5'-triphosphoguanosine)-ribonucleoside in mRNA + S-adenosyl-L-methionine = a 5'-end (N(7)-methyl 5'-triphosphoguanosine)-ribonucleoside in mRNA + S-adenosyl-L-homocysteine. The catalysed reaction is a 5'-end (N(7)-methyl 5'-triphosphoguanosine)-ribonucleoside in mRNA + S-adenosyl-L-methionine = a 5'-end (N(7)-methyl 5'-triphosphoguanosine)-(2'-O-methyl-ribonucleoside) in mRNA + S-adenosyl-L-homocysteine + H(+). Functionally, plays a role in virus budding by binding to the cell membrane and gathering the viral RNA into a nucleocapsid that forms the core of a mature virus particle. During virus entry, may induce genome penetration into the host cytoplasm after hemifusion induced by the surface proteins. Can migrate to the cell nucleus where it modulates host functions. Overcomes the anti-viral effects of host EXOC1 by sequestering and degrading the latter through the proteasome degradation pathway. Inhibits RNA silencing by interfering with host Dicer. In terms of biological role, prevents premature fusion activity of envelope proteins in trans-Golgi by binding to envelope protein E at pH6.0. After virion release in extracellular space, gets dissociated from E dimers. Its function is as follows. Acts as a chaperone for envelope protein E during intracellular virion assembly by masking and inactivating envelope protein E fusion peptide. prM is the only viral peptide matured by host furin in the trans-Golgi network probably to avoid catastrophic activation of the viral fusion activity in acidic Golgi compartment prior to virion release. prM-E cleavage is inefficient, and many virions are only partially matured. These uncleaved prM would play a role in immune evasion. Functionally, may play a role in virus budding. Exerts cytotoxic effects by activating a mitochondrial apoptotic pathway through M ectodomain. May display a viroporin activity. Binds to host cell surface receptor and mediates fusion between viral and cellular membranes. Envelope protein is synthesized in the endoplasmic reticulum in the form of heterodimer with protein prM. They play a role in virion budding in the ER, and the newly formed immature particle is covered with 60 spikes composed of heterodimer between precursor prM and envelope protein E. The virion is transported to the Golgi apparatus where the low pH causes dissociation of PrM-E heterodimers and formation of E homodimers. prM-E cleavage is inefficient, and many virions are only partially matured. These uncleaved prM would play a role in immune evasion. In terms of biological role, involved in immune evasion, pathogenesis and viral replication. Once cleaved off the polyprotein, is targeted to three destinations: the viral replication cycle, the plasma membrane and the extracellular compartment. Essential for viral replication. Required for formation of the replication complex and recruitment of other non-structural proteins to the ER-derived membrane structures. Excreted as a hexameric lipoparticle that plays a role against host immune response. Antagonizing the complement function. Binds to the host macrophages and dendritic cells. Inhibits signal transduction originating from Toll-like receptor 3 (TLR3). Its function is as follows. Component of the viral RNA replication complex that functions in virion assembly and antagonizes the host alpha/beta interferon antiviral response. Functionally, required cofactor for the serine protease function of NS3. May have membrane-destabilizing activity and form viroporins. Displays three enzymatic activities: serine protease, NTPase and RNA helicase. NS3 serine protease, in association with NS2B, performs its autocleavage and cleaves the polyprotein at dibasic sites in the cytoplasm: C-prM, NS2A-NS2B, NS2B-NS3, NS3-NS4A, NS4A-2K and NS4B-NS5. NS3 RNA helicase binds RNA and unwinds dsRNA in the 3' to 5' direction. In terms of biological role, regulates the ATPase activity of the NS3 helicase activity. NS4A allows NS3 helicase to conserve energy during unwinding. Its function is as follows. Functions as a signal peptide for NS4B and is required for the interferon antagonism activity of the latter. Functionally, induces the formation of ER-derived membrane vesicles where the viral replication takes place. Inhibits interferon (IFN)-induced host STAT1 phosphorylation and nuclear translocation, thereby preventing the establishment of cellular antiviral state by blocking the IFN-alpha/beta pathway. Inhibits STAT2 translocation in the nucleus after IFN-alpha treatment. Replicates the viral (+) and (-) RNA genome, and performs the capping of genomes in the cytoplasm. NS5 methylates viral RNA cap at guanine N-7 and ribose 2'-O positions. Besides its role in RNA genome replication, also prevents the establishment of cellular antiviral state by blocking the interferon-alpha/beta (IFN-alpha/beta) signaling pathway. Inhibits host TYK2 and STAT2 phosphorylation, thereby preventing activation of JAK-STAT signaling pathway. This Kokobera virus (KOKV) protein is Genome polyprotein.